Reading from the N-terminus, the 153-residue chain is MSENCPCGSELQYSVCCGPYLRGGAYPDTPEALMRSRYCAYAQQNLPYLIASWHPSCNAQNFAASLEESFSNTRWHGLRVISTEVLSDQDTGYVTFFARFSENKQQSFLHERSRFLREEQRWYYIDGTFPPTGRNDRCPCGSGKKYKKCCGQH.

The protein belongs to the UPF0225 family.

In Erwinia tasmaniensis (strain DSM 17950 / CFBP 7177 / CIP 109463 / NCPPB 4357 / Et1/99), this protein is UPF0225 protein ETA_15740.